The following is a 21-amino-acid chain: Dahlein-5.2 (21 aa).

As to expression, expressed by the skin dorsal glands.

Its subcellular location is the secreted. Functionally, has no antimicrobial activity. Strongly inhibits the formation of NO by neuronal nitric oxide synthase at micromolar concentrations. The protein is Dahlein-5.2 of Ranoidea dahlii (Dahl's aquatic frog).